We begin with the raw amino-acid sequence, 83 residues long: U5-theraphotoxin-Hs1a 3 (83 aa).

The N-terminal stretch at M1 to A21 is a signal peptide. The propeptide occupies S22–R49. 3 cysteine pairs are disulfide-bonded: C51–C63, C56–C68, and C62–C75.

It belongs to the neurotoxin 10 (Hwtx-1) family. 51 (Hntx-8) subfamily. Hntx-8 sub-subfamily. As to expression, expressed by the venom gland.

It localises to the secreted. Its function is as follows. Agglutinates erythrocytes. This chain is U5-theraphotoxin-Hs1a 3, found in Cyriopagopus schmidti (Chinese bird spider).